A 526-amino-acid chain; its full sequence is Major facilitator superfamily domain-containing protein 4A (526 aa).

The next 12 membrane-spanning stretches (helical) occupy residues 21–41 (LTYW…GPTI), 55–75 (ITLV…IGGF), 84–104 (LSSL…IPLC), 107–127 (LLML…IDTI), 142–162 (VFLQ…PLIA), 215–235 (YAFW…FVLV), 297–317 (LSFF…DGIV), 341–361 (GYLT…AIPL), 377–397 (GVIV…FLFI), 401–421 (CLGL…EDIL), 430–450 (VLVT…GSVM), and 458–478 (FLLC…FLYF).

Belongs to the major facilitator superfamily.

Its subcellular location is the membrane. The polypeptide is Major facilitator superfamily domain-containing protein 4A (mfsd4a) (Danio rerio (Zebrafish)).